The following is a 423-amino-acid chain: Serine--tRNA ligase (423 aa).

T231 to E233 provides a ligand contact to L-serine. R262–E264 provides a ligand contact to ATP. E285 lines the L-serine pocket. Residue E349–S352 coordinates ATP. Residue S384 coordinates L-serine.

It belongs to the class-II aminoacyl-tRNA synthetase family. Type-1 seryl-tRNA synthetase subfamily. Homodimer. The tRNA molecule binds across the dimer.

The protein resides in the cytoplasm. The enzyme catalyses tRNA(Ser) + L-serine + ATP = L-seryl-tRNA(Ser) + AMP + diphosphate + H(+). The catalysed reaction is tRNA(Sec) + L-serine + ATP = L-seryl-tRNA(Sec) + AMP + diphosphate + H(+). It participates in aminoacyl-tRNA biosynthesis; selenocysteinyl-tRNA(Sec) biosynthesis; L-seryl-tRNA(Sec) from L-serine and tRNA(Sec): step 1/1. Its function is as follows. Catalyzes the attachment of serine to tRNA(Ser). Is also able to aminoacylate tRNA(Sec) with serine, to form the misacylated tRNA L-seryl-tRNA(Sec), which will be further converted into selenocysteinyl-tRNA(Sec). The sequence is that of Serine--tRNA ligase from Lactococcus lactis subsp. lactis (strain IL1403) (Streptococcus lactis).